A 564-amino-acid chain; its full sequence is Arginine--tRNA ligase (564 aa).

Residues 122–132 (PNIAKPFSIGH) carry the 'HIGH' region motif.

Belongs to the class-I aminoacyl-tRNA synthetase family. Monomer.

It localises to the cytoplasm. It carries out the reaction tRNA(Arg) + L-arginine + ATP = L-arginyl-tRNA(Arg) + AMP + diphosphate. The sequence is that of Arginine--tRNA ligase from Lactococcus lactis subsp. lactis (strain IL1403) (Streptococcus lactis).